The sequence spans 277 residues: uncharacterized protein (277 aa).

Helical transmembrane passes span 46 to 66, 73 to 93, 143 to 163, 174 to 194, and 228 to 248; these read IAAI…YGGL, LFEG…ILWM, TTVI…VLIL, FFYA…GYGT, and KGLI…MEWV.

This sequence belongs to the oxidase-dependent Fe transporter (OFeT) (TC 9.A.10.1) family.

It localises to the cell membrane. This is an uncharacterized protein from Archaeoglobus fulgidus (strain ATCC 49558 / DSM 4304 / JCM 9628 / NBRC 100126 / VC-16).